Consider the following 148-residue polypeptide: MLSRAIFRNPVINRTLLRARPGAYHATRLTKNTFIQSRKYSDAHDEETFEEFTARYEKEFDEAYDLFEVQRVLNNCFSYDLVPAPAVIEKALRAARRVNDLPTAIRVFEALKYKVENEDQYKAYLDELKDVRQELGVPLKEELFPSSS.

The transit peptide at 1–40 directs the protein to the mitochondrion; sequence MLSRAIFRNPVINRTLLRARPGAYHATRLTKNTFIQSRKY.

It belongs to the cytochrome c oxidase subunit 5A family. As to quaternary structure, component of the cytochrome c oxidase (complex IV, CIV), a multisubunit enzyme composed of 12 subunits. The complex is composed of a catalytic core of 3 subunits COX1, COX2 and COX3, encoded in the mitochondrial DNA, and 9 supernumerary subunits COX4, COX5A (or COX5B), COX6, COX7, COX8, COX9, COX12, COX13 and COX26, which are encoded in the nuclear genome. The complex exists as a monomer or a dimer and forms supercomplexes (SCs) in the inner mitochondrial membrane with a dimer of ubiquinol-cytochrome c oxidoreductase (cytochrome b-c1 complex, complex III, CIII), resulting in 2 different assemblies (supercomplexes III(2)IV and III(2)IV(2)). COX26 interacts with COX1, COX2, COX6 and COX9.

Its subcellular location is the mitochondrion inner membrane. Its pathway is energy metabolism; oxidative phosphorylation. Component of the cytochrome c oxidase, the last enzyme in the mitochondrial electron transport chain which drives oxidative phosphorylation. The respiratory chain contains 3 multisubunit complexes succinate dehydrogenase (complex II, CII), ubiquinol-cytochrome c oxidoreductase (cytochrome b-c1 complex, complex III, CIII) and cytochrome c oxidase (complex IV, CIV), that cooperate to transfer electrons derived from NADH and succinate to molecular oxygen, creating an electrochemical gradient over the inner membrane that drives transmembrane transport and the ATP synthase. Cytochrome c oxidase is the component of the respiratory chain that catalyzes the reduction of oxygen to water. Electrons originating from reduced cytochrome c in the intermembrane space (IMS) are transferred via the dinuclear copper A center (CU(A)) of COX2 and heme A of COX1 to the active site in COX1, a binuclear center (BNC) formed by heme A3 and copper B (CU(B)). The BNC reduces molecular oxygen to 2 water molecules using 4 electrons from cytochrome c in the IMS and 4 protons from the mitochondrial matrix. COX6 may stabilize the region of CIV at the interface with CIII, supporting a role in formation or stability of the CIII(2)IV(2) SC. This Saccharomyces cerevisiae (strain ATCC 204508 / S288c) (Baker's yeast) protein is Cytochrome c oxidase subunit 6, mitochondrial (COX6).